The primary structure comprises 115 residues: NAD(P)H-quinone oxidoreductase subunit M (115 aa).

The protein belongs to the complex I NdhM subunit family. In terms of assembly, NDH-1 can be composed of about 15 different subunits; different subcomplexes with different compositions have been identified which probably have different functions.

It localises to the cellular thylakoid membrane. It catalyses the reaction a plastoquinone + NADH + (n+1) H(+)(in) = a plastoquinol + NAD(+) + n H(+)(out). It carries out the reaction a plastoquinone + NADPH + (n+1) H(+)(in) = a plastoquinol + NADP(+) + n H(+)(out). Functionally, NDH-1 shuttles electrons from an unknown electron donor, via FMN and iron-sulfur (Fe-S) centers, to quinones in the respiratory and/or the photosynthetic chain. The immediate electron acceptor for the enzyme in this species is believed to be plastoquinone. Couples the redox reaction to proton translocation, and thus conserves the redox energy in a proton gradient. Cyanobacterial NDH-1 also plays a role in inorganic carbon-concentration. The chain is NAD(P)H-quinone oxidoreductase subunit M from Prochlorococcus marinus (strain MIT 9312).